The primary structure comprises 431 residues: tRNA (adenine(37)-N6)-methyltransferase (431 aa).

A TsaA-like domain is found at 30–168 (TEPIGYLESC…YIADYDSPQN (139 aa)). Residues 47-49 (PRQ), 90-91 (HK), arginine 117, leucine 127, and 148-151 (IHGT) contribute to the S-adenosyl-L-methionine site. Disordered stretches follow at residues 167-189 (QNLE…ATAN) and 201-243 (KAQP…DRER). Positions 207-243 (STKEKPKCREHRTSDENSQKFRDTSEIQHTLPEDRER) are enriched in basic and acidic residues.

Belongs to the tRNA methyltransferase O family.

It carries out the reaction N(6)-L-threonylcarbamoyladenosine(37) in tRNA + S-adenosyl-L-methionine = N(6)-methyl,N(6)-L-threonylcarbamoyladenosine(37) in tRNA + S-adenosyl-L-homocysteine + H(+). In terms of biological role, S-adenosyl-L-methionine-dependent methyltransferase responsible for the addition of the methyl group in the formation of N6-methyl-N6-threonylcarbamoyladenosine at position 37 (m(6)t(6)A37) of the tRNA anticodon loop of tRNA(Ser)(GCU). The methyl group of m(6)t(6)A37 may improve the efficiency of the tRNA decoding ability. May bind to tRNA. This is tRNA (adenine(37)-N6)-methyltransferase from Rattus norvegicus (Rat).